The following is a 261-amino-acid chain: Sepiapterin reductase (261 aa).

N-acetylmethionine is present on methionine 1. 14 to 20 (GASRGFG) serves as a coordination point for NADP(+). Serine 32 carries the post-translational modification Phosphoserine. NADP(+) contacts are provided by residues 42–43 (RN) and 69–70 (DL). The residue at position 103 (serine 103) is a Phosphoserine. Substrate is bound by residues 157–158 (SL) and tyrosine 170. Lysine 174 contacts NADP(+). Position 199 (glycine 199) interacts with substrate. 201–206 (LDTDMQ) is an NADP(+) binding site. Serine 213 is modified (phosphoserine; by CaMK2; in vitro). A substrate-binding site is contributed by aspartate 257.

Belongs to the sepiapterin reductase family. In terms of assembly, homodimer. In vitro phosphorylation of Ser-213 by CaMK2 does not change kinetic parameters.

It is found in the cytoplasm. The enzyme catalyses L-erythro-7,8-dihydrobiopterin + NADP(+) = L-sepiapterin + NADPH + H(+). It catalyses the reaction (6R)-L-erythro-5,6,7,8-tetrahydrobiopterin + 2 NADP(+) = 6-pyruvoyl-5,6,7,8-tetrahydropterin + 2 NADPH + 2 H(+). In terms of biological role, catalyzes the final one or two reductions in tetra-hydrobiopterin biosynthesis to form 5,6,7,8-tetrahydrobiopterin. The polypeptide is Sepiapterin reductase (SPR) (Homo sapiens (Human)).